A 382-amino-acid chain; its full sequence is MKNAVHFGAGNIGRGFIGKLLADANVSVTFADVDAPLVDQLSHRQEYKVKVVGSECQIDTVTHVTAVNSASEEVIDRIVQTDLVTTAVGPNVLDIIAKTIAQGIAKRFAAGNLAPLNIIACENMVRGTTHLKGEVYKHLDASLHAQVDELVGFVDSAVDRIVPPAEAANDDPLEVTVESFSEWIVDEQQFKGEVPSIAGMEKTHNLMAFVERKLFTLNTGHCITAYLGCLQGHRTIREAIENPAICDQVKQAMMESGEVLIRRYGFDREMHQAYIEKILARFANPFLVDEVDRVGRQPIRKLGMNDRLIKPLLGTIEFGTANQHLLKGIAAALKYQNDSDPQAVELQRSLQQVGVKKTLAKYTSLAEDSVEVAKIETLYNQL.

Residue 4–15 (AVHFGAGNIGRG) participates in NAD(+) binding.

This sequence belongs to the mannitol dehydrogenase family.

The enzyme catalyses D-mannitol 1-phosphate + NAD(+) = beta-D-fructose 6-phosphate + NADH + H(+). The chain is Mannitol-1-phosphate 5-dehydrogenase from Vibrio vulnificus (strain YJ016).